Reading from the N-terminus, the 301-residue chain is Fructokinase (301 aa).

Zn(2+) is bound by residues histidine 165, cysteine 181, histidine 184, and cysteine 187.

It belongs to the ROK (NagC/XylR) family. The cofactor is Mg(2+).

The catalysed reaction is D-fructose + ATP = D-fructose 6-phosphate + ADP + H(+). With respect to regulation, inhibition by zinc ions. The polypeptide is Fructokinase (frk) (Zymomonas mobilis subsp. mobilis (strain ATCC 31821 / ZM4 / CP4)).